Reading from the N-terminus, the 429-residue chain is Enolase (429 aa).

Gln164 is a binding site for (2R)-2-phosphoglycerate. Glu206 serves as the catalytic Proton donor. Mg(2+)-binding residues include Asp243, Glu286, and Asp313. Residues Lys338, Arg367, Ser368, and Lys389 each coordinate (2R)-2-phosphoglycerate. The active-site Proton acceptor is the Lys338.

The protein belongs to the enolase family. Mg(2+) serves as cofactor.

It is found in the cytoplasm. Its subcellular location is the secreted. The protein resides in the cell surface. It carries out the reaction (2R)-2-phosphoglycerate = phosphoenolpyruvate + H2O. Its pathway is carbohydrate degradation; glycolysis; pyruvate from D-glyceraldehyde 3-phosphate: step 4/5. Its function is as follows. Catalyzes the reversible conversion of 2-phosphoglycerate (2-PG) into phosphoenolpyruvate (PEP). It is essential for the degradation of carbohydrates via glycolysis. This chain is Enolase, found in Thermosipho africanus (strain TCF52B).